The following is a 429-amino-acid chain: UDP-N-acetylglucosamine 1-carboxyvinyltransferase (429 aa).

Residue 22 to 23 (KN) coordinates phosphoenolpyruvate. Arg102 contributes to the UDP-N-acetyl-alpha-D-glucosamine binding site. Catalysis depends on Cys126, which acts as the Proton donor. Residue Cys126 is modified to 2-(S-cysteinyl)pyruvic acid O-phosphothioketal. UDP-N-acetyl-alpha-D-glucosamine-binding positions include 131–135 (RPVDL), Asp316, and Ile338.

Belongs to the EPSP synthase family. MurA subfamily.

Its subcellular location is the cytoplasm. The catalysed reaction is phosphoenolpyruvate + UDP-N-acetyl-alpha-D-glucosamine = UDP-N-acetyl-3-O-(1-carboxyvinyl)-alpha-D-glucosamine + phosphate. It participates in cell wall biogenesis; peptidoglycan biosynthesis. In terms of biological role, cell wall formation. Adds enolpyruvyl to UDP-N-acetylglucosamine. This is UDP-N-acetylglucosamine 1-carboxyvinyltransferase from Rhodopseudomonas palustris (strain BisB18).